We begin with the raw amino-acid sequence, 1492 residues long: Neogenin (1492 aa).

The signal sequence occupies residues 1-36; that stretch reads MAAEREAGRLLCTSSSRRCCPPPPLLLLLPLLLLLG. The Extracellular portion of the chain corresponds to 37–1136; sequence RPASGAAATK…PTSPLDSNML (1100 aa). Ig-like C2-type domains lie at 63 to 158, 163 to 249, 254 to 347, and 352 to 437; these read PFYF…AKLT, PRFT…AELK, PEEI…AELT, and PGFL…AQLI. N-linked (GlcNAc...) asparagine glycosylation occurs at asparagine 84. 3 cysteine pairs are disulfide-bonded: cysteine 85–cysteine 140, cysteine 184–cysteine 232, and cysteine 281–cysteine 331. Residue asparagine 221 is glycosylated (N-linked (GlcNAc...) asparagine). An N-linked (GlcNAc...) asparagine glycan is attached at asparagine 337. Residues cysteine 373 and cysteine 421 are joined by a disulfide bond. Fibronectin type-III domains are found at residues 472–566, 572–662, 667–762, 772–862, 887–986, and 988–1085; these read APRD…TQPE, PAPN…TLSD, APQN…TFES, VPSS…RPHT, PPVG…LVPT, and PPKD…TPKA. Asparagine 501 and asparagine 520 each carry an N-linked (GlcNAc...) asparagine glycan. N-linked (GlcNAc...) asparagine glycans are attached at residues asparagine 670 and asparagine 746. N-linked (GlcNAc...) asparagine glycosylation occurs at asparagine 940. The segment at 1072 to 1128 is disordered; sequence GPMSEAVQFRTPKADSSDKMPNDQALGSAGKGSRLPDLGSDYKPPMSGSNSPHGSPT. Residues 1083 to 1092 are compositionally biased toward basic and acidic residues; that stretch reads PKADSSDKMP. Polar residues predominate over residues 1118–1128; the sequence is SGSNSPHGSPT. Residues 1137 to 1157 form a helical membrane-spanning segment; that stretch reads LVIIVSVGVITIVVVVVIAVF. Over 1158 to 1492 the chain is Cytoplasmic; sequence CTRRTTSHQK…MKDLNAITTA (335 aa). Disordered stretches follow at residues 1205-1237, 1266-1300, and 1321-1396; these read PIDKSPDPNPVMTDTPIPRNSQDITPVDNSMDS, PKMMMPFDSQPPQPVISAHPIHSLDNPHHHFHSSS, and SMSL…FAVP. Phosphoserine occurs at positions 1209 and 1225. Polar residues predominate over residues 1222–1237; that stretch reads PRNSQDITPVDNSMDS. Position 1229 is a phosphothreonine (threonine 1229). Composition is skewed to polar residues over residues 1321–1353 and 1361–1380; these read SMSLSDRANSTESVRNTPSTDTMPASSSQTCCT and ATSSSYLASSQEEDSGQSLP. Serine 1432 is modified (phosphoserine). Residue threonine 1435 is modified to Phosphothreonine. Residues serine 1463, serine 1465, and serine 1466 each carry the phosphoserine modification.

Belongs to the immunoglobulin superfamily. DCC family. As to quaternary structure, interacts with BMP2, BMP4, BMP6, and BMP7. Interacts with RGMA and RGMB. Interacts with MYO10. Widely expressed.

It is found in the cell membrane. Its function is as follows. Multi-functional cell surface receptor regulating cell adhesion in many diverse developmental processes, including neural tube and mammary gland formation, myogenesis and angiogenesis. Receptor for members of the BMP, netrin, and repulsive guidance molecule (RGM) families. Netrin-Neogenin interactions result in a chemoattractive axon guidance response and cell-cell adhesion, the interaction between NEO1/Neogenin and RGMa and RGMb induces a chemorepulsive response. The protein is Neogenin of Mus musculus (Mouse).